Reading from the N-terminus, the 136-residue chain is Transport protein particle 20 kDa subunit (136 aa).

Belongs to the TRAPP small subunits family. Sedlin subfamily.

It localises to the cytoplasm. The protein resides in the golgi apparatus. It is found in the cis-Golgi network. Its subcellular location is the endoplasmic reticulum. In terms of biological role, component of the TRAPP I and TRAPP II complexes. TRAPP I plays a key role in the late stages of endoplasmic reticulum to Golgi traffic. TRAPP II seems to play a role in intra-Golgi transport. The sequence is that of Transport protein particle 20 kDa subunit (trs20) from Schizosaccharomyces pombe (strain 972 / ATCC 24843) (Fission yeast).